Here is a 746-residue protein sequence, read N- to C-terminus: WD repeat-containing protein 91 (746 aa).

Positions 183–215 form a coiled coil; the sequence is QRTNQVQEENEVLRQKLFALQAEIHRLKKEEQQ. S256 bears the Phosphoserine mark. A compositionally biased stretch (low complexity) spans 265-278; the sequence is LLPQSKKSPSRLSP. Positions 265-336 are disordered; the sequence is LLPQSKKSPS…QHRQRRLQDH (72 aa). A compositionally biased stretch (polar residues) spans 282–299; it reads PPQTQSSAKKESFGSQTT. Phosphoserine occurs at positions 288 and 293. 7 WD repeats span residues 405–444, 447–487, 514–554, 559–598, 601–640, 663–701, and 708–746; these read EHHS…QTKA, ISKS…NLCE, AASS…QQLQ, PEPI…CAMS, AHCG…LKVS, VQVP…KVLE, and GHRA…AHKV.

It belongs to the WD repeat WDR91 family. Interacts with WDR81; involved in early to late endosome cargo transport. Interacts with BECN1; negatively regulates the PI3 kinase/PI3K activity associated with endosomal membranes.

It is found in the early endosome membrane. The protein resides in the late endosome membrane. Functions as a negative regulator of the PI3 kinase/PI3K activity associated with endosomal membranes via BECN1, a core subunit of the PI3K complex. By modifying the phosphatidylinositol 3-phosphate/PtdInsP3 content of endosomal membranes may regulate endosome fusion, recycling, sorting and early to late endosome transport. It is for instance, required for the delivery of cargos like BST2/tetherin from early to late endosome and thereby participates indirectly to their degradation by the lysosome. May play a role in meiosis. The polypeptide is WD repeat-containing protein 91 (Bos taurus (Bovine)).